We begin with the raw amino-acid sequence, 602 residues long: NAD-dependent protein deacetylase sir-2.1 (602 aa).

Residues 25–57 (PEIETMHIENSVEGESGRQRTESTASVNSESWQ) form a disordered region. Polar residues predominate over residues 46-57 (ESTASVNSESWQ). Residues 119 to 374 (KLFTYNSLSD…RDICYALGGS (256 aa)) enclose the Deacetylase sirtuin-type domain. NAD(+) is bound by residues 144-163 (GAGVSVSCGIPDFRSKDGIY) and 228-231 (QNID). The Proton acceptor role is filled by His246. Residues Cys254, Cys257, Cys278, and Cys281 each contribute to the Zn(2+) site. NAD(+) contacts are provided by residues 318–320 (GSS), 343–345 (NRE), and Cys360. Disordered regions lie at residues 411-468 (QERR…SDEV) and 520-551 (RNRHESDSSCESCSTVPGSDKSEANPLSRSQS).

It belongs to the sirtuin family. Class I subfamily. As to quaternary structure, interacts with ftt-2 and par-5. Interacts with daf-16 following heat-shock, which causes daf-16 to accumulate in the nucleus. Interaction with daf-16 is promoted by ftt-2. It depends on Zn(2+) as a cofactor.

The protein resides in the nucleus. It carries out the reaction N(6)-acetyl-L-lysyl-[protein] + NAD(+) + H2O = 2''-O-acetyl-ADP-D-ribose + nicotinamide + L-lysyl-[protein]. Functionally, NAD-dependent deacetylase. Required for a reduction of the 'Lys-16' acetylation of histone H4 (H4K16ac) on dosage-compensated X chromosomes in hermaphrodites. Functions upstream of daf-16 in the insulin-like signaling pathway, promoting daf-16 mediated transcriptional activation and increased life-span. May also regulate life-span independently of daf-16 by modulating the transcription of genes involved in the stress response of the endoplasmic reticulum (ER). Acts upstream of the nicotinic acid metabolism pathway, which may be linked to the regulation of longevity. Plays a role in ascaroside-mediated longevity and stress resistance. The protein is NAD-dependent protein deacetylase sir-2.1 (sir-2.1) of Caenorhabditis briggsae.